The sequence spans 133 residues: ATP synthase epsilon chain (133 aa).

It belongs to the ATPase epsilon chain family. F-type ATPases have 2 components, CF(1) - the catalytic core - and CF(0) - the membrane proton channel. CF(1) has five subunits: alpha(3), beta(3), gamma(1), delta(1), epsilon(1). CF(0) has three main subunits: a, b and c.

Its subcellular location is the cell membrane. Its function is as follows. Produces ATP from ADP in the presence of a proton gradient across the membrane. The chain is ATP synthase epsilon chain from Bacillus anthracis (strain A0248).